The following is a 341-amino-acid chain: Glucokinase (341 aa).

18–23 (GDIGGT) is a binding site for ATP.

Belongs to the bacterial glucokinase family.

Its subcellular location is the cytoplasm. The catalysed reaction is D-glucose + ATP = D-glucose 6-phosphate + ADP + H(+). In Rhizobium etli (strain ATCC 51251 / DSM 11541 / JCM 21823 / NBRC 15573 / CFN 42), this protein is Glucokinase.